The primary structure comprises 1080 residues: Isoleucine--tRNA ligase (1080 aa).

The 'HIGH' region signature appears at 48-58 (PYASGSIHLGT). Residues 628-632 (KMSKS) carry the 'KMSKS' region motif. Position 631 (Lys-631) interacts with ATP.

The protein belongs to the class-I aminoacyl-tRNA synthetase family. IleS type 2 subfamily. Monomer. Zn(2+) serves as cofactor.

The protein localises to the cytoplasm. The enzyme catalyses tRNA(Ile) + L-isoleucine + ATP = L-isoleucyl-tRNA(Ile) + AMP + diphosphate. Functionally, catalyzes the attachment of isoleucine to tRNA(Ile). As IleRS can inadvertently accommodate and process structurally similar amino acids such as valine, to avoid such errors it has two additional distinct tRNA(Ile)-dependent editing activities. One activity is designated as 'pretransfer' editing and involves the hydrolysis of activated Val-AMP. The other activity is designated 'posttransfer' editing and involves deacylation of mischarged Val-tRNA(Ile). This chain is Isoleucine--tRNA ligase, found in Methanopyrus kandleri (strain AV19 / DSM 6324 / JCM 9639 / NBRC 100938).